The primary structure comprises 293 residues: Ribosomal protein L11 methyltransferase (293 aa).

T145, G166, D188, and N230 together coordinate S-adenosyl-L-methionine.

This sequence belongs to the methyltransferase superfamily. PrmA family.

It localises to the cytoplasm. The enzyme catalyses L-lysyl-[protein] + 3 S-adenosyl-L-methionine = N(6),N(6),N(6)-trimethyl-L-lysyl-[protein] + 3 S-adenosyl-L-homocysteine + 3 H(+). In terms of biological role, methylates ribosomal protein L11. In Salmonella arizonae (strain ATCC BAA-731 / CDC346-86 / RSK2980), this protein is Ribosomal protein L11 methyltransferase.